We begin with the raw amino-acid sequence, 235 residues long: uncharacterized protein (235 aa).

Disordered stretches follow at residues 1 to 47 (MSHK…QSTN) and 78 to 128 (QEHH…KQPQ). Residues 20 to 33 (HPPGQSLSSISWSP) are compositionally biased toward polar residues. Positions 84–98 (QQQQQQRQNIRSQNS) are enriched in low complexity. Positions 106–128 (VQESQWTSSASNSSLKKQEKQPQ) are enriched in polar residues.

This is an uncharacterized protein from Saccharomyces cerevisiae (strain ATCC 204508 / S288c) (Baker's yeast).